The sequence spans 327 residues: 2-phosphoglycerate kinase (327 aa).

Positions 1 to 20 (MSEKSSRKERDEKTEKETAR) are enriched in basic and acidic residues. The disordered stretch occupies residues 1-27 (MSEKSSRKERDEKTEKETARQGKHRRI). Positions 25-111 (RRIRVKSRHY…LWRRIKKREE (87 aa)) constitute an ATP-cone domain.

Belongs to the 2-phosphoglycerate kinase family. A divalent metal cation serves as cofactor.

The catalysed reaction is (2R)-2-phosphoglycerate + ATP = (2R)-2,3-bisphosphoglycerate + ADP + H(+). It participates in thermoadapter biosynthesis; cyclic 2,3-diphosphoglycerate biosynthesis; cyclic 2,3-diphosphoglycerate from 2-phospho-D-glycerate: step 1/2. In terms of biological role, catalyzes the phosphorylation of 2-phosphoglycerate to 2,3-diphosphoglycerate. Involved in the biosynthesis of cyclic 2,3-bisphosphoglycerate, a thermoprotectant. The polypeptide is 2-phosphoglycerate kinase (Methanopyrus kandleri (strain AV19 / DSM 6324 / JCM 9639 / NBRC 100938)).